We begin with the raw amino-acid sequence, 217 residues long: Nucleoside diphosphate kinase homolog 5 (217 aa).

Residues 18–151 are NDK; the sequence is ERTLALIKPD…REIRFMFPHS (134 aa).

The protein belongs to the NDK family.

It localises to the cell projection. It is found in the cilium. In terms of biological role, functions as part of axonemal radial spoke complexes that play an important part in the motility of sperm and cilia. Does not seem to have nucleoside diphosphate kinase (NDPK) activity. Exhibits a 3'-5' exonuclease activity with a preference for single-stranded DNA, suggesting roles in DNA proofreading and repair. The protein is Nucleoside diphosphate kinase homolog 5 (nme5) of Danio rerio (Zebrafish).